A 202-amino-acid chain; its full sequence is dITP/XTP pyrophosphatase (202 aa).

9 to 14 (TGNKGK) serves as a coordination point for substrate. Aspartate 73 functions as the Proton acceptor in the catalytic mechanism. Position 73 (aspartate 73) interacts with Mg(2+). Residues serine 74, 158-161 (FGYD), lysine 181, and 186-187 (HR) contribute to the substrate site.

It belongs to the HAM1 NTPase family. In terms of assembly, homodimer. Mg(2+) is required as a cofactor.

The enzyme catalyses XTP + H2O = XMP + diphosphate + H(+). It catalyses the reaction dITP + H2O = dIMP + diphosphate + H(+). It carries out the reaction ITP + H2O = IMP + diphosphate + H(+). Pyrophosphatase that catalyzes the hydrolysis of nucleoside triphosphates to their monophosphate derivatives, with a high preference for the non-canonical purine nucleotides XTP (xanthosine triphosphate), dITP (deoxyinosine triphosphate) and ITP. Seems to function as a house-cleaning enzyme that removes non-canonical purine nucleotides from the nucleotide pool, thus preventing their incorporation into DNA/RNA and avoiding chromosomal lesions. The chain is dITP/XTP pyrophosphatase from Lactobacillus acidophilus (strain ATCC 700396 / NCK56 / N2 / NCFM).